We begin with the raw amino-acid sequence, 619 residues long: Phosphomethylpyrimidine synthase (619 aa).

The segment covering 1–11 has biased composition (polar residues); it reads MHEQRSLTMNA. The tract at residues 1–25 is disordered; it reads MHEQRSLTMNALTPAVSTGPLPASR. Residues Asn220, Met249, Tyr278, His314, 334 to 336, 375 to 378, and Glu414 contribute to the substrate site; these read SRG and DGLR. His418 is a binding site for Zn(2+). Substrate is bound at residue Tyr441. His482 provides a ligand contact to Zn(2+). 3 residues coordinate [4Fe-4S] cluster: Cys562, Cys565, and Cys570.

The protein belongs to the ThiC family. As to quaternary structure, homodimer. It depends on [4Fe-4S] cluster as a cofactor.

It catalyses the reaction 5-amino-1-(5-phospho-beta-D-ribosyl)imidazole + S-adenosyl-L-methionine = 4-amino-2-methyl-5-(phosphooxymethyl)pyrimidine + CO + 5'-deoxyadenosine + formate + L-methionine + 3 H(+). It participates in cofactor biosynthesis; thiamine diphosphate biosynthesis. Catalyzes the synthesis of the hydroxymethylpyrimidine phosphate (HMP-P) moiety of thiamine from aminoimidazole ribotide (AIR) in a radical S-adenosyl-L-methionine (SAM)-dependent reaction. The sequence is that of Phosphomethylpyrimidine synthase from Mesorhizobium japonicum (strain LMG 29417 / CECT 9101 / MAFF 303099) (Mesorhizobium loti (strain MAFF 303099)).